A 240-amino-acid polypeptide reads, in one-letter code: Biotin--[acetyl-CoA-carboxylase] ligase (240 aa).

A BPL/LPL catalytic domain is found at 1-176 (MLARTDSTNA…AFARWQAQLD (176 aa)). Biotin contacts are provided by residues 7–9 (STN), Gln-30, 34–36 (RGR), and Lys-102.

It belongs to the biotin--protein ligase family.

The catalysed reaction is biotin + L-lysyl-[protein] + ATP = N(6)-biotinyl-L-lysyl-[protein] + AMP + diphosphate + H(+). Its function is as follows. Activates biotin to form biotinyl-5'-adenylate and transfers the biotin moiety to biotin-accepting proteins. The chain is Biotin--[acetyl-CoA-carboxylase] ligase (birA) from Paracoccus denitrificans.